We begin with the raw amino-acid sequence, 964 residues long: Coatomer subunit beta (964 aa).

HEAT repeat units follow at residues Glu129–Trp166, Ala238–Ala275, Lys314–Ile351, Asp393–Ala430, and Ser466–Ser506. The segment covering Arg490 to Lys501 has biased composition (basic and acidic residues). Residues Arg490 to Ser530 are disordered. The segment covering Ala512–Asn526 has biased composition (low complexity).

As to quaternary structure, oligomeric complex that consists of at least the alpha, beta, beta', gamma, delta, epsilon and zeta subunits. During oogenesis and spermatogenesis, expressed in ovariole, germarium, testis tip and testis.

It localises to the cytoplasm. It is found in the golgi apparatus membrane. The protein resides in the cytoplasmic vesicle. The protein localises to the COPI-coated vesicle membrane. Its function is as follows. The coatomer is a cytosolic protein complex that binds to dilysine motifs and reversibly associates with Golgi non-clathrin-coated vesicles, which further mediate biosynthetic protein transport from the ER, via the Golgi up to the trans Golgi network. Coatomer complex is required for budding from Golgi membranes, and is essential for the retrograde Golgi-to-ER transport of dilysine-tagged proteins. Required for limiting lipid storage in lipid droplets. The chain is Coatomer subunit beta from Drosophila melanogaster (Fruit fly).